Reading from the N-terminus, the 377-residue chain is Chaperone protein DnaJ (377 aa).

Residues 5 to 70 (DFYEVLGVER…SKRAAYDQYG (66 aa)) enclose the J domain. The segment at 136–214 (GTTVTIRVPT…CHGQGRVEEQ (79 aa)) adopts a CR-type zinc-finger fold. Residues Cys149, Cys152, Cys166, Cys169, Cys188, Cys191, Cys202, and Cys205 each contribute to the Zn(2+) site. CXXCXGXG motif repeat units follow at residues 149 to 156 (CKTCNGSG), 166 to 173 (CTTCGGIG), 188 to 195 (CPRCHGTG), and 202 to 209 (CGSCHGQG).

This sequence belongs to the DnaJ family. In terms of assembly, homodimer. Zn(2+) is required as a cofactor.

It localises to the cytoplasm. Functionally, participates actively in the response to hyperosmotic and heat shock by preventing the aggregation of stress-denatured proteins and by disaggregating proteins, also in an autonomous, DnaK-independent fashion. Unfolded proteins bind initially to DnaJ; upon interaction with the DnaJ-bound protein, DnaK hydrolyzes its bound ATP, resulting in the formation of a stable complex. GrpE releases ADP from DnaK; ATP binding to DnaK triggers the release of the substrate protein, thus completing the reaction cycle. Several rounds of ATP-dependent interactions between DnaJ, DnaK and GrpE are required for fully efficient folding. Also involved, together with DnaK and GrpE, in the DNA replication of plasmids through activation of initiation proteins. This Pseudomonas aeruginosa (strain LESB58) protein is Chaperone protein DnaJ.